Reading from the N-terminus, the 143-residue chain is Large-conductance mechanosensitive channel (143 aa).

Transmembrane regions (helical) follow at residues 10-30 (FAVK…GAFS) and 89-109 (GSFI…FLMV).

It belongs to the MscL family. As to quaternary structure, homopentamer.

The protein resides in the cell inner membrane. Functionally, channel that opens in response to stretch forces in the membrane lipid bilayer. May participate in the regulation of osmotic pressure changes within the cell. This is Large-conductance mechanosensitive channel from Burkholderia cenocepacia (strain HI2424).